The primary structure comprises 523 residues: Exodeoxyribonuclease 7 large subunit (523 aa).

The tract at residues 502 to 523 (PGASPAARTRAGKAKADQGSLF) is disordered.

The protein belongs to the XseA family. As to quaternary structure, heterooligomer composed of large and small subunits.

It is found in the cytoplasm. The enzyme catalyses Exonucleolytic cleavage in either 5'- to 3'- or 3'- to 5'-direction to yield nucleoside 5'-phosphates.. In terms of biological role, bidirectionally degrades single-stranded DNA into large acid-insoluble oligonucleotides, which are then degraded further into small acid-soluble oligonucleotides. This chain is Exodeoxyribonuclease 7 large subunit, found in Rhodospirillum centenum (strain ATCC 51521 / SW).